The sequence spans 810 residues: Transitional endoplasmic reticulum ATPase homolog 2 (810 aa).

ATP-binding positions include 252–258 (PGTGKTL), Asn353, His389, and 526–531 (GCGKTL). A compositionally biased stretch (basic and acidic residues) spans 713 to 727 (RQEKERQDRSARGEE). Disordered regions lie at residues 713–732 (RQEKERQDRSARGEELMEDE) and 777–810 (FGNNFKFPGEAPSAGQPVGGNGGSGGNDDDDLYN). Residues 793-802 (PVGGNGGSGG) show a composition bias toward gly residues. The tract at residues 805–810 (DDDLYN) is interaction with ufd-2.

Belongs to the AAA ATPase family. CDC48 subfamily. As to quaternary structure, homohexamer; oligomerization is ATP-independent. Forms a ring-shaped particle of 18.3 nm diameter, that displays 6-fold radial symmetry. Interacts with cdc-48.1 and thus may form heterohexamers. Forms a complex composed of ubxn-3, cdc-48.1 and/or cdc-48.2 and substrate cdt-1. Interacts (via N-terminus) with ubxn-3. Interacts (via N-terminus) with atx-3 (via RRDR motif). Interacts (via N-terminus) with ubxn-5. Interacts with ufd-1. Interacts (via DDDLYN motif) with ufd-2. Interacts (via N-terminus) with ubxn-1. Interacts (via N-terminus) with ubxn-2. Interacts (via N-terminus) with ubxn-4. Interacts with ubxn-6. In terms of tissue distribution, expressed in body wall muscles.

Its subcellular location is the cytoplasm. The enzyme catalyses ATP + H2O = ADP + phosphate + H(+). The first ATP-binding region has low ATPase activity. The second ATP-binding region is responsible for ATPase activity. ATP binding to the first ATP-binding region induces intrinsic activity of the second ATP-binding region. While ATP binding to the first ATP-binding region appears to prevent ATP hydrolysis by the second ATP-binding region, ADP-binding to first region promotes the coordinate and cooperative ATPase cycle of the second ATP-binding region. ATP binding to the first ATP-binding region induces a conformational change, promoting the rotation of the first ATP-binding region relative to the second ATP-binding region in the hexamer. Inhibited by N-ethylmaleimide (NEM). Its function is as follows. ATP-dependent chaperone which probably uses the energy provided by ATP hydrolysis to generate mechanical force to unfold substrate proteins, disassemble protein complexes, and disaggregate protein aggregates. However, able to prevent aggregation of unfolded proteins also in an ATP-independent manner. Targets polyubiquitinated proteins for proteasomal degradation by binding to 'Lys-48'-linked polyubiquitin chains. Involved in the cytoplasmic elimination of misfolded proteins exported from the ER. This pathway, known as ERAD, prevents the activation of the unfolded protein response (UPR) caused by the accumulation of misfolded proteins in the ER. Together with udf-2 and chn-1, regulates myosin assembly in body wall muscles by targeting myosin chaperone unc-45 for proteasomal degradation. During oocyte meiosis and together with cdc-48.1, required for chromosome condensation at the diakinesis phase in prophase I and for progression of metaphase I. During the first embryonic cell division, regulates DNA replication and thus chromosome segregation and decondensation, and nuclear envelope re-assembly. In S phase and in association with ufd-1, npl-4.1 and/or npl-4.2 and ubxn-3, ensures the degradation of DNA licensing factor cdt-1 after the initiation of DNA replication and thus the disassembly of the DNA replication CMG helicase complex by promoting the dissociation from chromatin of several of its components including cdc-45 and sld-5. Regulates ubxn-3 nuclear localization during S phase. During the first embryonic cell divisions and together with cdc-48.1, regulates the re-assembly of the nuclear envelope after mitosis possibly by inactivating kinase air-2, a component of the chromosomal passenger complex (CPC). The polypeptide is Transitional endoplasmic reticulum ATPase homolog 2 (cdc-48.2) (Caenorhabditis elegans).